The chain runs to 1322 residues: MVISKRAGGRRAAGGAAAQAAPPVNRGIAKADWREGFKKPQAGVSDMTLLTQITNEAVNDNLHKRFSNAEIYTYIGNVLISVNPFRDLGIYTDEILRSYRGKNRLEMPPHVYAIAEGAYYNMLAYKENQCVIISGESGAGKTEAAKRIMQYIAAVSGDTTGTGSTSSGIHTIKDMVLATNPLLESFGCAKTLRNNNSSRHGKYLEIMFDANGSPVGATITNYLLEKARVVGQIRNERNFHIFYQLTKAASPQQRELFGLQGPEAYAYTADSQCLDVPGIDDHADFAAAFEAMRIIGLTDDEQMSMVRMLATILWLGNVHFVENAQGDAELANPDVTAFCAYLLEVDPSAVQRALTQRIMETQRGGRRGSVYEVPLNPTQAAAVRDALSKAIYNNLFDWIVARINRSLQAQSQTAASVIGVLDIYGFEIFENNSFEQLCINYVNEKLQQIFIELTLKKEQEEYAQEQIQWTPIQYFNNKIVCDLIEAKRPPGIFSALNDAVATAHADSSAADNSFMQRTSMLSSNPHFEARGSKFLVRHYAGDVMYNVQGMTEKNKDALLKDILNLVDSSSNAFLIGLFPERPDPNSKKRPPSAGDRIKASANALVDNLMQAQPSYIRTIKPNQNKSPTEYDTQAVLHQIKYLGLRENIRVRRAGFAYRNTFEKIVQRFYLLSRATSYAGDYIWQGDARSGCERIFLDTGIARDEWQLGVTKGFIKNPETLFALETMRDRYWHNMAMRIQRAWRAFMRRREESARRIQRAWRRSREGHEFLELREYGHQLLAGRKERRRFSLISMRRFMGDYLDLNGSSAEGRMLRASANLPPNEPIVFSARAQLLVSRLGRTSIPSPRFLLMSPRAVYILVTHLVNKRPQTTCERVIPLSTIRQVGLSTLRDDWIVLQVGTDEGDPLLHCDFKTEFVAYLLQQTGGRTHVVIAPQLEYVRKGRKKAHVSFRKDESIPVGDVYKSSIVSVGSGEPPTSVSRPPAKKLPRSAQPSTKRRTTSRPVTSRRPVPTVLPTTTASRGLPPAPGGTASASALAVPTTSTVAPASSASGNASGARHVPAPPPVSGGSGLPPYLQAPATSAPSSGMPSYLQRAVPAAPTAPAAPAASAAPTAAQSTSGIPSYLGSSTTKLAPPVTVQQLGSSSTAQTRSVPAPPSASATPAVATPALAPVKAAPLPPPPPTGRRLPRYRALYDFETQEAGELPLRTGDIVELEEKEENGWWLVKKGSTEGWSPADYLELIAEPAAAKPRPPPPAKPASAKPAAAPARVSQSSVTSSWTPPDSHAAPVAVMPGMGDPGGFAAILARKKAERAAAAEQAHVPE.

In terms of domain architecture, Myosin motor spans 42-728 (AGVSDMTLLT…TLFALETMRD (687 aa)). 135–142 (GESGAGKT) is a binding site for ATP. The residue at position 369 (serine 369) is a Phosphoserine. The interval 417–499 (VIGVLDIYGF…PGIFSALNDA (83 aa)) is actin-binding. IQ domains lie at 732-752 (HNMAMRIQRAWRAFMRRREES) and 753-778 (ARRIQRAWRRSREGHEFLELREYGHQ). Residues 786 to 980 (RRRFSLISMR…SGEPPTSVSR (195 aa)) form the TH1 domain. Disordered regions lie at residues 966 to 1090 (IVSV…MPSY) and 1137 to 1162 (VQQLGSSSTAQTRSVPAPPSASATPA). Composition is skewed to low complexity over residues 1000-1017 (SRPVTSRRPVPTVLPTTT) and 1027-1056 (GGTASASALAVPTTSTVAPASSASGNASGA). 2 stretches are compositionally biased toward polar residues: residues 1078–1087 (PATSAPSSGM) and 1137–1148 (VQQLGSSSTAQT). One can recognise an SH3 domain in the interval 1184-1243 (RRLPRYRALYDFETQEAGELPLRTGDIVELEEKEENGWWLVKKGSTEGWSPADYLELIAE). Residues 1246–1300 (AAKPRPPPPAKPASAKPAAAPARVSQSSVTSSWTPPDSHAAPVAVMPGMGDPGGF) are disordered. The segment covering 1257-1267 (PASAKPAAAPA) has biased composition (low complexity). Residues 1269 to 1280 (VSQSSVTSSWTP) are compositionally biased toward polar residues.

The protein belongs to the TRAFAC class myosin-kinesin ATPase superfamily. Myosin family. Phosphorylation of the TEDS site (Ser-369) is required for the polarization of the actin cytoskeleton. Phosphorylation probably activates the myosin-I ATPase activity.

Its subcellular location is the cytoplasm. It localises to the cytoskeleton. It is found in the actin patch. Type-I myosin implicated in the organization of the actin cytoskeleton. Required for proper actin cytoskeleton polarization. At the cell cortex, assembles in patch-like structures together with proteins from the actin-polymerizing machinery and promotes actin assembly. Functions as actin nucleation-promoting factor (NPF) for the Arp2/3 complex. The polypeptide is Myosin-1 (MYO1) (Malassezia globosa (strain ATCC MYA-4612 / CBS 7966) (Dandruff-associated fungus)).